We begin with the raw amino-acid sequence, 565 residues long: NAD-dependent malic enzyme (565 aa).

Tyr-104 acts as the Proton donor in catalysis. Arg-157 lines the NAD(+) pocket. The active-site Proton acceptor is the Lys-175. Glu-246, Asp-247, and Asp-270 together coordinate a divalent metal cation. Residues Asp-270 and Asn-418 each coordinate NAD(+).

This sequence belongs to the malic enzymes family. Homotetramer. Mg(2+) is required as a cofactor. The cofactor is Mn(2+).

The enzyme catalyses (S)-malate + NAD(+) = pyruvate + CO2 + NADH. It catalyses the reaction oxaloacetate + H(+) = pyruvate + CO2. In Shigella boydii serotype 18 (strain CDC 3083-94 / BS512), this protein is NAD-dependent malic enzyme.